A 576-amino-acid polypeptide reads, in one-letter code: POU domain, class 6, transcription factor 1 (576 aa).

The interval 65 to 88 (PAEAGSCDPDHSAEATVAARSPSE) is disordered. Positions 414-488 (EDGINLEEIR…VLEKWLMEAE (75 aa)) constitute a POU-specific domain. The homeobox DNA-binding region spans 509-568 (KRKRRTSFTPQAIEALNAYFEKNPLPTGQEITEIAKELNYDREVVRVWFCNRRQTLKNTS).

The protein belongs to the POU transcription factor family. Class-6 subfamily. Isoform C1 and isoform C2 are found in the brain, while isoform C7 is found in the testis.

It localises to the nucleus. Functionally, transcription factor that binds preferentially to a variant of the octamer motif (5'-ATGATAAT-3'). This is POU domain, class 6, transcription factor 1 (Pou6f1) from Mus musculus (Mouse).